The chain runs to 254 residues: Small ribosomal subunit protein uS2 (254 aa).

Positions alanine 225–glutamine 254 are disordered. A compositionally biased stretch (basic and acidic residues) spans leucine 226 to glutamine 254.

It belongs to the universal ribosomal protein uS2 family.

This is Small ribosomal subunit protein uS2 from Cytophaga hutchinsonii (strain ATCC 33406 / DSM 1761 / CIP 103989 / NBRC 15051 / NCIMB 9469 / D465).